A 709-amino-acid chain; its full sequence is Protein IMPAIRED IN BABA-INDUCED STERILITY 1 (709 aa).

The N-myristoyl glycine moiety is linked to residue Gly2. Residues Ser53 to Ser80 are disordered. Residues Phe131–Phe418 form the Protein kinase domain. ATP is bound by residues Ile137–Val145 and Lys160. Asp255 (proton acceptor) is an active-site residue. Disordered stretches follow at residues Ser434–Gly536 and Ser566–Glu609. The span at Lys437–Arg449 shows a compositional bias: basic and acidic residues. Over residues His484–His494 the composition is skewed to basic residues. Over residues Ser495–Thr505 the composition is skewed to polar residues. 2 stretches are compositionally biased toward basic and acidic residues: residues Lys509 to His523 and Val586 to Glu609.

Belongs to the protein kinase superfamily. Ser/Thr protein kinase family.

In terms of biological role, required for beta-aminobutyric acid (BABA)-induced resistance (BABA-IR) against bacteria (e.g. P.syringae) and oomycetes (e.g. H.parasitica) via priming for salicylate (SA)-dependent defense responses such as pathogenesis-related PR-1 gene expression and trailing necrosis. Involved in BABA-mediated sterility. Necessary for the inheritance of BABA-priming to next generation, especially for the primed to be primed phenotype which consists in an enhanced second BABA-priming in transgenerationally primed plants. This is Protein IMPAIRED IN BABA-INDUCED STERILITY 1 from Arabidopsis thaliana (Mouse-ear cress).